Reading from the N-terminus, the 497-residue chain is RNA-splicing ligase RtcB homolog (497 aa).

5 residues coordinate Mn(2+): aspartate 111, cysteine 114, histidine 219, histidine 251, and histidine 345. Asparagine 218–glutamate 222 contacts GMP. GMP-binding positions include histidine 345–asparagine 346, glycine 394–methionine 397, serine 401, histidine 420–glycine 423, and lysine 496. The GMP-histidine intermediate role is filled by histidine 420.

It belongs to the RtcB family. In terms of assembly, catalytic component of the tRNA-splicing ligase complex. The cofactor is Mn(2+).

The catalysed reaction is a 3'-end 3'-phospho-ribonucleotide-RNA + a 5'-end dephospho-ribonucleoside-RNA + GTP = a ribonucleotidyl-ribonucleotide-RNA + GMP + diphosphate. It carries out the reaction a 3'-end 2',3'-cyclophospho-ribonucleotide-RNA + a 5'-end dephospho-ribonucleoside-RNA + GTP + H2O = a ribonucleotidyl-ribonucleotide-RNA + GMP + diphosphate + H(+). Functionally, catalytic subunit of the tRNA-splicing ligase complex that acts by directly joining spliced tRNA halves to mature-sized tRNAs by incorporating the precursor-derived splice junction phosphate into the mature tRNA as a canonical 3',5'-phosphodiester. May act as an RNA ligase with broad substrate specificity, and may function toward other RNAs. In Monosiga brevicollis (Choanoflagellate), this protein is RNA-splicing ligase RtcB homolog.